We begin with the raw amino-acid sequence, 463 residues long: ATP synthase subunit beta (463 aa).

152–159 (GGAGVGKT) provides a ligand contact to ATP.

This sequence belongs to the ATPase alpha/beta chains family. As to quaternary structure, F-type ATPases have 2 components, CF(1) - the catalytic core - and CF(0) - the membrane proton channel. CF(1) has five subunits: alpha(3), beta(3), gamma(1), delta(1), epsilon(1). CF(0) has three main subunits: a(1), b(2) and c(9-12). The alpha and beta chains form an alternating ring which encloses part of the gamma chain. CF(1) is attached to CF(0) by a central stalk formed by the gamma and epsilon chains, while a peripheral stalk is formed by the delta and b chains.

Its subcellular location is the cell inner membrane. It catalyses the reaction ATP + H2O + 4 H(+)(in) = ADP + phosphate + 5 H(+)(out). In terms of biological role, produces ATP from ADP in the presence of a proton gradient across the membrane. The catalytic sites are hosted primarily by the beta subunits. The sequence is that of ATP synthase subunit beta from Shewanella denitrificans (strain OS217 / ATCC BAA-1090 / DSM 15013).